The following is a 327-amino-acid chain: Delta(3,5)-Delta(2,4)-dienoyl-CoA isomerase, mitochondrial (327 aa).

The transit peptide at 1–33 (MATAMTVSSKLRGLLMQQLRGTSQLYFNISLRS) directs the protein to the mitochondrion. A substrate-binding site is contributed by 115 to 119 (SGIDL). Residue K147 is modified to N6-acetyllysine. Residue G173 coordinates substrate. K230 carries the N6-succinyllysine modification. S267 is modified (phosphoserine). K316 carries the N6-succinyllysine modification. The Microbody targeting signal signature appears at 325–327 (SKL). An N6-acetyllysine modification is found at K326.

It belongs to the enoyl-CoA hydratase/isomerase family. Homohexamer.

Its subcellular location is the mitochondrion. It is found in the peroxisome. It catalyses the reaction (3E,5Z)-octadienoyl-CoA = (2E,4E)-octadienoyl-CoA. The catalysed reaction is (3E,5Z,8Z,11Z,14Z)-eicosapentaenoyl-CoA = (2E,4E,8Z,11Z,14Z)-eicosapentaenoyl-CoA. The protein operates within lipid metabolism; fatty acid beta-oxidation. In terms of biological role, isomerization of 3-trans,5-cis-dienoyl-CoA to 2-trans,4-trans-dienoyl-CoA. The polypeptide is Delta(3,5)-Delta(2,4)-dienoyl-CoA isomerase, mitochondrial (Mus musculus (Mouse)).